We begin with the raw amino-acid sequence, 240 residues long: Phosphoribosylaminoimidazole-succinocarboxamide synthase (240 aa).

The protein belongs to the SAICAR synthetase family.

The enzyme catalyses 5-amino-1-(5-phospho-D-ribosyl)imidazole-4-carboxylate + L-aspartate + ATP = (2S)-2-[5-amino-1-(5-phospho-beta-D-ribosyl)imidazole-4-carboxamido]succinate + ADP + phosphate + 2 H(+). The protein operates within purine metabolism; IMP biosynthesis via de novo pathway; 5-amino-1-(5-phospho-D-ribosyl)imidazole-4-carboxamide from 5-amino-1-(5-phospho-D-ribosyl)imidazole-4-carboxylate: step 1/2. The chain is Phosphoribosylaminoimidazole-succinocarboxamide synthase from Wolbachia pipientis subsp. Culex pipiens (strain wPip).